The primary structure comprises 123 residues: WAP four-disulfide core domain protein 5 (123 aa).

The N-terminal stretch at 1 to 24 (MRIQSLLLLGALLAVGSQLPAVFG) is a signal peptide. 2 WAP domains span residues 27–73 (KGEK…CVPR) and 74–121 (VSVK…RDPA). 8 cysteine pairs are disulfide-bonded: Cys34-Cys62, Cys41-Cys66, Cys49-Cys61, Cys55-Cys70, Cys81-Cys109, Cys88-Cys113, Cys96-Cys108, and Cys102-Cys117.

It localises to the secreted. Functionally, putative acid-stable proteinase inhibitor. The chain is WAP four-disulfide core domain protein 5 (WFDC5) from Papio anubis (Olive baboon).